A 36-amino-acid chain; its full sequence is Kappa-isophellitoxin-Tst1a (36 aa).

The ShKT domain occupies 2–36; that stretch reads CENNFSDRECERRKKDCDSSMKFRELSCPKTCGTC. 3 cysteine pairs are disulfide-bonded: Cys-2-Cys-36, Cys-11-Cys-29, and Cys-18-Cys-33.

The protein belongs to the sea anemone type 1 potassium channel toxin family. Type 1a subfamily. As to expression, predominantly expressed in mesenterial filaments (at protein level), a morphological structure that has a functional role in prey killing and digestion. Also expressed in club-tips, tentacles, actinopharynx, body column, mesenterial filaments and pedal disk.

The protein resides in the secreted. It is found in the nematocyst. Probable toxin with unknown function. Does not inhibit all channels tested. Is not cytotoxic on macrophage. In Telmatactis stephensoni (Sea anemone), this protein is Kappa-isophellitoxin-Tst1a.